Consider the following 444-residue polypeptide: Radical S-adenosyl methionine domain-containing protein 1, mitochondrial (444 aa).

Residues 1–39 constitute a mitochondrion transit peptide; the sequence is MSTRVLTLTLLKKRHLMQCFWSTVGSVHLRSIASDKIPS. The Radical SAM core domain maps to 40–274; sequence HAVEASLYVH…CRVLEESGFH (235 aa). Residue Tyr-47 participates in S-adenosyl-L-methionine binding. [4Fe-4S] cluster is bound by residues Cys-53, Cys-57, and Cys-60. S-adenosyl-L-methionine is bound by residues Gly-102, 103–104, Glu-135, Gln-162, Arg-174, and Asp-199; that span reads GT.

This sequence belongs to the anaerobic coproporphyrinogen-III oxidase family. HemW subfamily. Requires [4Fe-4S] cluster as cofactor.

The protein resides in the mitochondrion. Functionally, may be a heme chaperone, appears to bind heme. Homologous bacterial proteins do not have oxygen-independent coproporphyrinogen-III oxidase activity. Binds 1 [4Fe-4S] cluster. The cluster is coordinated with 3 cysteines and an exchangeable S-adenosyl-L-methionine. This Danio rerio (Zebrafish) protein is Radical S-adenosyl methionine domain-containing protein 1, mitochondrial (rsad1).